Reading from the N-terminus, the 454-residue chain is Natural cytotoxicity triggering receptor 3 ligand 1 (454 aa).

Residues 1–24 (MTWRAAASTCAALLILLWALTTEG) form the signal peptide. The Extracellular portion of the chain corresponds to 25–262 (DLKVEMMAGG…SETEKTDNFS (238 aa)). Residues 27–138 (KVEMMAGGTQ…LKAQGTVQLE (112 aa)) form the Ig-like V-type domain. N-linked (GlcNAc...) asparagine glycosylation is found at asparagine 43 and asparagine 57. Cysteine 48 and cysteine 122 are oxidised to a cystine. 2 interaction with NCR3 regions span residues 59-62 (TSMG) and 127-130 (TPLK). Residues 143–244 (PASRLLLDQV…LHTPLRSNFT (102 aa)) form the Ig-like C1-type domain. A disulfide bridge links cysteine 163 with cysteine 228. N-linked (GlcNAc...) asparagine glycans are attached at residues asparagine 174, asparagine 208, asparagine 216, asparagine 242, and asparagine 260. The helical transmembrane segment at 263–283 (IHWWPISFIGVGLVLLIVLIP) threads the bilayer. Over 284–454 (WKKICNKSSS…QPPTLLLPLQ (171 aa)) the chain is Cytoplasmic. The segment at 291 to 429 (SSSAYTPLKC…APILPVSPIW (139 aa)) is retroviral-Gag-like. Residues 395–454 (GKSIDDNSTKSEKQTPREHSDAVPDAPILPVSPIWEPPPATTSTTPVLSSQPPTLLLPLQ) form a disordered region. A compositionally biased stretch (basic and acidic residues) spans 397-416 (SIDDNSTKSEKQTPREHSDA). Positions 435-454 (TTSTTPVLSSQPPTLLLPLQ) are enriched in low complexity.

In terms of assembly, monomer. Interacts specifically with NCR3, but not with other natural killer cell-activating receptors, including NCR1, NCR2 and KLRK1. In terms of tissue distribution, not detected in any normal tissue tested. Expressed at the surface of several tumor cell lines including T and B-lymphomas, myeloid leukemias, melanomas, carcinomas and large T SV40 antigen-transformed cells (at protein level).

It is found in the cell membrane. In terms of biological role, triggers NCR3-dependent natural killer cell activation. The protein is Natural cytotoxicity triggering receptor 3 ligand 1 (NCR3LG1) of Homo sapiens (Human).